The primary structure comprises 156 residues: Transcription antitermination protein NusB (156 aa).

Belongs to the NusB family.

Its function is as follows. Involved in transcription antitermination. Required for transcription of ribosomal RNA (rRNA) genes. Binds specifically to the boxA antiterminator sequence of the ribosomal RNA (rrn) operons. This Xanthomonas oryzae pv. oryzae (strain MAFF 311018) protein is Transcription antitermination protein NusB.